Consider the following 70-residue polypeptide: Probable protein transport protein Sec61 subunit gamma (70 aa).

Topologically, residues 1 to 39 are cytoplasmic; the sequence is MADQIQEILDVPREFLKDGIQFIKKCQKPDRREFIKISQ. The helical transmembrane segment at 40–58 threads the bilayer; the sequence is AVGTGFLIMGAVGYLVKLI. Residues 59 to 70 lie on the Extracellular side of the membrane; it reads HIPLNQVLVGGA.

The protein belongs to the SecE/SEC61-gamma family. Heterotrimeric complex composed of SEC61-alpha, SEC61-beta and SEC61-gamma.

The protein resides in the endoplasmic reticulum membrane. Functionally, necessary for protein translocation in the endoplasmic reticulum. This is Probable protein transport protein Sec61 subunit gamma from Neurospora crassa (strain ATCC 24698 / 74-OR23-1A / CBS 708.71 / DSM 1257 / FGSC 987).